Here is a 777-residue protein sequence, read N- to C-terminus: Penicillin-binding protein 1B (777 aa).

Topologically, residues 1 to 30 (MTRKSSNRSRGRKARSGKSASSSKLQIWLG) are cytoplasmic. The helical; Signal-anchor for type II membrane protein transmembrane segment at 31–52 (RIWSIGWKLALTLAAVLVFIGI) threads the bilayer. Over 53-777 (YLDSMIKQRF…TEWIKKLFEW (725 aa)) the chain is Periplasmic. The transglycosylase stretch occupies residues 162 to 334 (LRLEPKLMGM…SYYNPMRYAE (173 aa)). E200 (proton donor; for transglycosylase activity) is an active-site residue. The tract at residues 415-709 (SKLEQAIHDQ…ASGALRVYAQ (295 aa)) is transpeptidase. S476 serves as the catalytic Acyl-ester intermediate; for transpeptidase activity.

It in the N-terminal section; belongs to the glycosyltransferase 51 family. This sequence in the C-terminal section; belongs to the transpeptidase family.

It is found in the cell inner membrane. The catalysed reaction is [GlcNAc-(1-&gt;4)-Mur2Ac(oyl-L-Ala-gamma-D-Glu-L-Lys-D-Ala-D-Ala)](n)-di-trans,octa-cis-undecaprenyl diphosphate + beta-D-GlcNAc-(1-&gt;4)-Mur2Ac(oyl-L-Ala-gamma-D-Glu-L-Lys-D-Ala-D-Ala)-di-trans,octa-cis-undecaprenyl diphosphate = [GlcNAc-(1-&gt;4)-Mur2Ac(oyl-L-Ala-gamma-D-Glu-L-Lys-D-Ala-D-Ala)](n+1)-di-trans,octa-cis-undecaprenyl diphosphate + di-trans,octa-cis-undecaprenyl diphosphate + H(+). It catalyses the reaction Preferential cleavage: (Ac)2-L-Lys-D-Ala-|-D-Ala. Also transpeptidation of peptidyl-alanyl moieties that are N-acyl substituents of D-alanine.. It participates in cell wall biogenesis; peptidoglycan biosynthesis. Its function is as follows. Cell wall formation. Synthesis of cross-linked peptidoglycan from the lipid intermediates. The enzyme has a penicillin-insensitive transglycosylase N-terminal domain (formation of linear glycan strands) and a penicillin-sensitive transpeptidase C-terminal domain (cross-linking of the peptide subunits). The sequence is that of Penicillin-binding protein 1B (mrcB) from Vibrio cholerae serotype O1 (strain ATCC 39315 / El Tor Inaba N16961).